The following is a 73-amino-acid chain: Tetrahydromethanopterin S-methyltransferase subunit F (73 aa).

The chain crosses the membrane as a helical span at residues 52 to 72; sequence IGFAAGFLFSLLMVIVLPLLF.

It belongs to the MtrF family. In terms of assembly, the complex is composed of 8 subunits; MtrA, MtrB, MtrC, MtrD, MtrE, MtrF, MtrG and MtrH.

The protein resides in the cell membrane. The catalysed reaction is 5-methyl-5,6,7,8-tetrahydromethanopterin + coenzyme M + 2 Na(+)(in) = 5,6,7,8-tetrahydromethanopterin + methyl-coenzyme M + 2 Na(+)(out). It functions in the pathway one-carbon metabolism; methanogenesis from CO(2); methyl-coenzyme M from 5,10-methylene-5,6,7,8-tetrahydromethanopterin: step 2/2. Functionally, part of a complex that catalyzes the formation of methyl-coenzyme M and tetrahydromethanopterin from coenzyme M and methyl-tetrahydromethanopterin. This is an energy-conserving, sodium-ion translocating step. The protein is Tetrahydromethanopterin S-methyltransferase subunit F of Methanosarcina barkeri (strain Fusaro / DSM 804).